The following is a 346-amino-acid chain: GTPase Obg (346 aa).

The 158-residue stretch at 1–158 (MKFLDQVKIY…RAIWLRLKLI (158 aa)) folds into the Obg domain. The 169-residue stretch at 159–327 (ADVGLVGLPN…LLREAFALVR (169 aa)) folds into the OBG-type G domain. Residues 165–172 (GLPNAGKS), 190–194 (FTTLA), 212–215 (DIPG), 279–282 (NKID), and 308–310 (SGF) contribute to the GTP site. Mg(2+)-binding residues include Ser172 and Thr192.

This sequence belongs to the TRAFAC class OBG-HflX-like GTPase superfamily. OBG GTPase family. In terms of assembly, monomer. Mg(2+) serves as cofactor.

The protein resides in the cytoplasm. Functionally, an essential GTPase which binds GTP, GDP and possibly (p)ppGpp with moderate affinity, with high nucleotide exchange rates and a fairly low GTP hydrolysis rate. Plays a role in control of the cell cycle, stress response, ribosome biogenesis and in those bacteria that undergo differentiation, in morphogenesis control. The protein is GTPase Obg of Phenylobacterium zucineum (strain HLK1).